Here is a 95-residue protein sequence, read N- to C-terminus: Co-chaperonin GroES (95 aa).

The protein belongs to the GroES chaperonin family. In terms of assembly, heptamer of 7 subunits arranged in a ring. Interacts with the chaperonin GroEL.

The protein localises to the cytoplasm. Functionally, together with the chaperonin GroEL, plays an essential role in assisting protein folding. The GroEL-GroES system forms a nano-cage that allows encapsulation of the non-native substrate proteins and provides a physical environment optimized to promote and accelerate protein folding. GroES binds to the apical surface of the GroEL ring, thereby capping the opening of the GroEL channel. This Rickettsia felis (strain ATCC VR-1525 / URRWXCal2) (Rickettsia azadi) protein is Co-chaperonin GroES.